Reading from the N-terminus, the 418-residue chain is Oxalate:formate antiporter (418 aa).

Transmembrane regions (helical) follow at residues 17–37 (WFYL…QYSW), 48–68 (LGVS…IQAG), 84–104 (IPLM…GMVD), 108–128 (ALYA…GIAM), 141–161 (LASG…LPLI), 172–192 (AAFM…AFVI), 222–242 (FWVL…LVAN), 250–270 (LGLA…FNGG), 288–308 (MSVV…IAAL), 311–331 (VAFI…YALF), 350–370 (FFWA…AAIA), and 378–398 (AFLI…FVIP). K355 provides a ligand contact to oxalate.

Belongs to the major facilitator superfamily. OFA (TC 2.A.1.11) family. As to quaternary structure, monomer.

The protein localises to the cell inner membrane. Functionally, anion transporter that carries out the exchange of divalent oxalate with monovalent formate, the product of oxalate decarboxylation, at the plasma membrane, and in doing so catalyzes the vectorial portion of a proton-motive metabolic cycle that drives ATP synthesis. The protein is Oxalate:formate antiporter (oxlT) of Oxalobacter formigenes.